The primary structure comprises 341 residues: Solute carrier family 25 member 43 (341 aa).

Solcar repeat units follow at residues 11–101 (TGGQ…TDDL), 105–185 (SQWS…LLVY), and 200–298 (SLPQ…LYQN). 6 helical membrane passes run 16-36 (LLCA…LELA), 68-88 (LWKG…VQLA), 110-130 (IMAG…TDLI), 166-186 (GVSL…LVYM), 205-225 (FANV…FETV), and 262-282 (VLGL…YFGI).

The protein belongs to the mitochondrial carrier (TC 2.A.29) family.

Its subcellular location is the mitochondrion inner membrane. This chain is Solute carrier family 25 member 43 (SLC25A43), found in Homo sapiens (Human).